Here is a 373-residue protein sequence, read N- to C-terminus: 3 beta-hydroxysteroid dehydrogenase/Delta 5--&gt;4-isomerase type 6 (373 aa).

The Proton acceptor role is filled by Tyr-155. Lys-159 contributes to the NAD(+) binding site. The helical transmembrane segment at 288 to 308 (VPLLYWLAFMLETVSFLLSPI) threads the bilayer.

Belongs to the 3-beta-HSD family. In terms of tissue distribution, expressed in skin and testis.

It localises to the endoplasmic reticulum membrane. Its subcellular location is the mitochondrion membrane. The catalysed reaction is a 3beta-hydroxy-Delta(5)-steroid + NAD(+) = a 3-oxo-Delta(5)-steroid + NADH + H(+). It catalyses the reaction a 3-oxo-Delta(5)-steroid = a 3-oxo-Delta(4)-steroid. It functions in the pathway lipid metabolism; steroid biosynthesis. 3-beta-HSD is a bifunctional enzyme, that catalyzes the oxidative conversion of Delta(5)-ene-3-beta-hydroxy steroid, and the oxidative conversion of ketosteroids. The 3-beta-HSD enzymatic system plays a crucial role in the biosynthesis of all classes of hormonal steroids. May be involved in local production of progesterone. The protein is 3 beta-hydroxysteroid dehydrogenase/Delta 5--&gt;4-isomerase type 6 (Hsd3b6) of Mus musculus (Mouse).